The chain runs to 567 residues: Cytochrome P450 monooxygenase 231 (567 aa).

The helical transmembrane segment at 3 to 23 (VSTNELAILAIVLLATGVLFY) threads the bilayer. N-linked (GlcNAc...) asparagine glycans are attached at residues asparagine 81 and asparagine 223. Heme is bound at residue cysteine 475.

It belongs to the cytochrome P450 family. The cofactor is heme.

It localises to the membrane. The protein operates within secondary metabolite biosynthesis. In terms of biological role, cytochrome P450 monooxygenase that is able to use anthracene, carbazole, pyrene, and phenanthrene as substrates for oxidation. These multifunctional properties against a series of polycyclic aromatic hydrocarbons (PAHs) suggest that CYP231 would play important roles, at least in part, in fungal metabolic systems involved in xenobiotic detoxification. The protein is Cytochrome P450 monooxygenase 231 of Postia placenta (strain ATCC 44394 / Madison 698-R) (Brown rot fungus).